The chain runs to 163 residues: Superoxide dismutase [Mn] (163 aa).

His-2, His-50, Asp-134, and His-138 together coordinate Mn(2+).

This sequence belongs to the iron/manganese superoxide dismutase family. It depends on Mn(2+) as a cofactor.

It catalyses the reaction 2 superoxide + 2 H(+) = H2O2 + O2. Destroys superoxide anion radicals which are normally produced within the cells and which are toxic to biological systems. The protein is Superoxide dismutase [Mn] (sodA) of Mycobacterium kansasii.